The following is a 127-amino-acid chain: Ribonuclease P protein component (127 aa).

It belongs to the RnpA family. Consists of a catalytic RNA component (M1 or rnpB) and a protein subunit.

The enzyme catalyses Endonucleolytic cleavage of RNA, removing 5'-extranucleotides from tRNA precursor.. Its function is as follows. RNaseP catalyzes the removal of the 5'-leader sequence from pre-tRNA to produce the mature 5'-terminus. It can also cleave other RNA substrates such as 4.5S RNA. The protein component plays an auxiliary but essential role in vivo by binding to the 5'-leader sequence and broadening the substrate specificity of the ribozyme. This chain is Ribonuclease P protein component, found in Prochlorococcus marinus (strain SARG / CCMP1375 / SS120).